A 436-amino-acid chain; its full sequence is Xylose isomerase (436 aa).

Residues His100 and Asp103 contribute to the active site. Glu231, Glu267, His270, Asp295, Asp306, Asp308, and Asp338 together coordinate Mg(2+).

It belongs to the xylose isomerase family. Homotetramer. Requires Mg(2+) as cofactor.

It localises to the cytoplasm. It carries out the reaction alpha-D-xylose = alpha-D-xylulofuranose. The chain is Xylose isomerase from Chelativorans sp. (strain BNC1).